Here is a 753-residue protein sequence, read N- to C-terminus: Enhancer of polycomb-like protein 1 (753 aa).

Disordered stretches follow at residues 1–75 and 429–490; these read MAAA…RDLH and VRTE…LPPA. The segment covering 46–71 has biased composition (polar residues); it reads LDSNELEPSQVHHLNSNASSSSTQQP. A compositionally biased stretch (basic and acidic residues) spans 429–449; the sequence is VRTEDEEREKKREKKKQDQEL. Low complexity predominate over residues 450–463; sequence ALKQQQALQQQQQQ.

Belongs to the enhancer of polycomb family. As to quaternary structure, component of the NuA4 histone acetyltransferase complex.

It localises to the nucleus. Its function is as follows. Component of the NuA4 histone acetyltransferase complex which is involved in transcriptional activation of selected genes principally by acetylation of nucleosomal histone H4 and H2A. The NuA4 complex is also involved in DNA repair. Involved in gene silencing by neighboring heterochromatin, blockage of the silencing spreading along the chromosome, and required for cell cycle progression through G2/M. In Candida albicans (strain SC5314 / ATCC MYA-2876) (Yeast), this protein is Enhancer of polycomb-like protein 1 (EPL1).